The following is a 775-amino-acid chain: GRIP and coiled-coil domain-containing protein 1 (775 aa).

Residues 13-61 (SKKDLLETIETQKKQLLQYQARLKDVVRAYKSLLKEKEALEASIKVLSV) adopt a coiled-coil conformation. Over residues 84 to 93 (DDRCSTHSED) the composition is skewed to basic and acidic residues. Disordered stretches follow at residues 84 to 153 (DDRC…AGGE) and 614 to 639 (GLPGRRSPVGGGGPGDPADTSSSDSL). Low complexity-rich tracts occupy residues 94–110 (STGTATSLDTAASLTST), 133–147 (ASWSESGVSSSSGDG), and 629–638 (DPADTSSSDS). Residues 153 to 763 (EVDKRLHQLK…PEEKQVIMRL (611 aa)) are a coiled coil. In terms of domain architecture, GRIP spans 713–763 (QSREGANLEYLKNIIYRFLTLPDSLGRQQTLTAILTILHFSPEEKQVIMRL).

The protein localises to the cytoplasm. The protein resides in the golgi apparatus membrane. In terms of biological role, probably involved in maintaining Golgi structure. The sequence is that of GRIP and coiled-coil domain-containing protein 1 (GCC1) from Homo sapiens (Human).